Consider the following 215-residue polypeptide: 3-dehydroquinate dehydratase (215 aa).

Residues 30-32 (EVR) and Arg-62 each bind 3-dehydroquinate. The Proton donor/acceptor role is filled by His-114. Lys-140 serves as the catalytic Schiff-base intermediate with substrate. Residues Arg-178 and Gln-201 each coordinate 3-dehydroquinate.

This sequence belongs to the type-I 3-dehydroquinase family. In terms of assembly, homodimer.

The enzyme catalyses 3-dehydroquinate = 3-dehydroshikimate + H2O. It participates in metabolic intermediate biosynthesis; chorismate biosynthesis; chorismate from D-erythrose 4-phosphate and phosphoenolpyruvate: step 3/7. Involved in the third step of the chorismate pathway, which leads to the biosynthesis of aromatic amino acids. Catalyzes the cis-dehydration of 3-dehydroquinate (DHQ) and introduces the first double bond of the aromatic ring to yield 3-dehydroshikimate. This chain is 3-dehydroquinate dehydratase, found in Methanopyrus kandleri (strain AV19 / DSM 6324 / JCM 9639 / NBRC 100938).